Here is a 96-residue protein sequence, read N- to C-terminus: Co-chaperonin GroES (96 aa).

It belongs to the GroES chaperonin family. Heptamer of 7 subunits arranged in a ring. Interacts with the chaperonin GroEL.

Its subcellular location is the cytoplasm. Together with the chaperonin GroEL, plays an essential role in assisting protein folding. The GroEL-GroES system forms a nano-cage that allows encapsulation of the non-native substrate proteins and provides a physical environment optimized to promote and accelerate protein folding. GroES binds to the apical surface of the GroEL ring, thereby capping the opening of the GroEL channel. This chain is Co-chaperonin GroES, found in Leptothrix cholodnii (strain ATCC 51168 / LMG 8142 / SP-6) (Leptothrix discophora (strain SP-6)).